Consider the following 478-residue polypeptide: NAD-dependent malic enzyme (478 aa).

An ACT domain is found at 12–86 (TIRLQFEKDI…GVKIVNVSDR (75 aa)). The active-site Proton donor is the Y114. K169 (proton acceptor) is an active-site residue. The a divalent metal cation site is built by E211, D212, and D237. Residues 270-273 (IGAA), N363, and N393 each bind NAD(+).

Belongs to the malic enzymes family. In terms of assembly, homotetramer. Mg(2+) is required as a cofactor. Requires Mn(2+) as cofactor.

It catalyses the reaction (S)-malate + NAD(+) = pyruvate + CO2 + NADH. It carries out the reaction oxaloacetate + H(+) = pyruvate + CO2. The activity is enhanced 5-7 times by ammonium and potassium. In terms of biological role, in addition to the NAD-dependent oxidative decarboxylation of L-malate, the enzyme catalyzes the decarboxylation of oxaloacetate. This Geobacillus stearothermophilus (Bacillus stearothermophilus) protein is NAD-dependent malic enzyme.